Here is a 460-residue protein sequence, read N- to C-terminus: Serine hydroxymethyltransferase, cytosolic (460 aa).

At K244 the chain carries N6-(pyridoxal phosphate)lysine.

It belongs to the SHMT family. As to quaternary structure, homotetramer. The cofactor is pyridoxal 5'-phosphate.

It localises to the cytoplasm. It catalyses the reaction (6R)-5,10-methylene-5,6,7,8-tetrahydrofolate + glycine + H2O = (6S)-5,6,7,8-tetrahydrofolate + L-serine. It participates in one-carbon metabolism; tetrahydrofolate interconversion. Interconversion of serine and glycine. This Encephalitozoon cuniculi (strain GB-M1) (Microsporidian parasite) protein is Serine hydroxymethyltransferase, cytosolic (SHMT-1).